A 227-amino-acid polypeptide reads, in one-letter code: MTRGKSFVTIKGTKDGLTFLLDDRCSFDELIKELTDKLSANYYKSGEEERPVYVKMDLGNRYLNEEDKAQLEAVVTEGRNMRIEHYDSGVISWEEAQLMKEHAQTTTLTRMIRSGQVVHVKGNVLLVGDINPGGLLTATGSIYVMGALKGRAHAGFEGKRDARICAAMMAPAGLQIADESLYFVDKDEAVEDHMKAAFLDEVNGSIRIERVQRLLDVAAEINKEAVS.

It belongs to the MinC family. In terms of assembly, interacts with MinD and FtsZ.

Functionally, cell division inhibitor that blocks the formation of polar Z ring septums. Rapidly oscillates between the poles of the cell to destabilize FtsZ filaments that have formed before they mature into polar Z rings. Prevents FtsZ polymerization. In Shouchella clausii (strain KSM-K16) (Alkalihalobacillus clausii), this protein is Probable septum site-determining protein MinC.